An 834-amino-acid polypeptide reads, in one-letter code: Translation factor GUF1 homolog, mitochondrial (834 aa).

Residues 1 to 66 constitute a mitochondrion transit peptide; it reads MKLCGVRSSG…RPLLAEPRRY (66 aa). Positions 129–314 constitute a tr-type G domain; sequence ACIRNVSVVA…HIIDKVPPPC (186 aa). Residues 138–145, 205–209, and 259–262 each bind GTP; these read AHVDHGKT, DTPGH, and TKMD. Disordered regions lie at residues 363 to 385 and 476 to 507; these read GAAS…ASGG and TGSP…SSSV. The segment covering 488–507 has biased composition (low complexity); it reads ATAAETASSDDASGSGSSSV.

The protein belongs to the TRAFAC class translation factor GTPase superfamily. Classic translation factor GTPase family. LepA subfamily.

The protein localises to the mitochondrion inner membrane. The catalysed reaction is GTP + H2O = GDP + phosphate + H(+). Functionally, promotes mitochondrial protein synthesis. May act as a fidelity factor of the translation reaction, by catalyzing a one-codon backward translocation of tRNAs on improperly translocated ribosomes. Binds to mitochondrial ribosomes in a GTP-dependent manner. This is Translation factor GUF1 homolog, mitochondrial from Leishmania infantum.